Consider the following 82-residue polypeptide: Endocuticle structural glycoprotein SgAbd-5 (82 aa).

Pyrrolidone carboxylic acid is present on Gln-1. Positions 18-82 (LGQYNFAYRT…ENGYQPRVQS (65 aa)) constitute a Chitin-binding type R&amp;R domain.

Component of the soft endocuticle of desert locust. This is Endocuticle structural glycoprotein SgAbd-5 from Schistocerca gregaria (Desert locust).